Consider the following 375-residue polypeptide: Probable RNA 3'-terminal phosphate cyclase-like protein (375 aa).

This sequence belongs to the RNA 3'-terminal cyclase family. Type 2 subfamily.

The protein localises to the nucleus. Its subcellular location is the nucleolus. Does not have cyclase activity. Plays a role in 40S-ribosomal-subunit biogenesis in the early pre-rRNA processing steps at sites A0, A1 and A2 that are required for proper maturation of the 18S RNA. This is Probable RNA 3'-terminal phosphate cyclase-like protein from Arabidopsis thaliana (Mouse-ear cress).